Reading from the N-terminus, the 181-residue chain is Isopentenyl-diphosphate Delta-isomerase (181 aa).

The Mn(2+) site is built by His-25 and His-32. Residues 30 to 164 (PLHLAFSCWL…PWAFSPWMVM (135 aa)) enclose the Nudix hydrolase domain. Cys-67 is an active-site residue. Position 67 (Cys-67) interacts with Mg(2+). His-69 is a binding site for Mn(2+). Residue Glu-87 coordinates Mg(2+). Mn(2+) is bound by residues Glu-114 and Glu-116. Glu-116 is a catalytic residue.

It belongs to the IPP isomerase type 1 family. In terms of assembly, homodimer. Mg(2+) is required as a cofactor. It depends on Mn(2+) as a cofactor.

It is found in the cytoplasm. The catalysed reaction is isopentenyl diphosphate = dimethylallyl diphosphate. It functions in the pathway isoprenoid biosynthesis; dimethylallyl diphosphate biosynthesis; dimethylallyl diphosphate from isopentenyl diphosphate: step 1/1. Catalyzes the 1,3-allylic rearrangement of the homoallylic substrate isopentenyl (IPP) to its highly electrophilic allylic isomer, dimethylallyl diphosphate (DMAPP). This chain is Isopentenyl-diphosphate Delta-isomerase, found in Salmonella typhi.